We begin with the raw amino-acid sequence, 294 residues long: TBC1 domain family member 7 (294 aa).

Residues 50-232 enclose the Rab-GAP TBC domain; the sequence is PLPSMYRIHV…RVWDKVISGS (183 aa).

Component of the TSC-TBC complex (also named Rhebulator complex), composed of 2 molecules of TSC1, 2 molecules of TSC2 and 1 molecule of TBC1D7.

The protein resides in the lysosome membrane. The protein localises to the cytoplasmic vesicle. Its subcellular location is the cytoplasm. It is found in the cytosol. Its function is as follows. Non-catalytic component of the TSC-TBC complex, a multiprotein complex that acts as a negative regulator of the canonical mTORC1 complex, an evolutionarily conserved central nutrient sensor that stimulates anabolic reactions and macromolecule biosynthesis to promote cellular biomass generation and growth. The TSC-TBC complex acts as a GTPase-activating protein (GAP) for the small GTPase RHEB, a direct activator of the protein kinase activity of mTORC1. In absence of nutrients, the TSC-TBC complex inhibits mTORC1, thereby preventing phosphorylation of ribosomal protein S6 kinase (RPS6KB1 and RPS6KB2) and EIF4EBP1 (4E-BP1) by the mTORC1 signaling. The TSC-TBC complex is inactivated in response to nutrients, relieving inhibition of mTORC1. This Danio rerio (Zebrafish) protein is TBC1 domain family member 7 (tbc1d7).